We begin with the raw amino-acid sequence, 589 residues long: Aspartate--tRNA ligase (589 aa).

E174 serves as a coordination point for L-aspartate. The aspartate stretch occupies residues 198–201 (QLFK). Residue R220 participates in L-aspartate binding. ATP contacts are provided by residues 220 to 222 (RDE) and Q229. An L-aspartate-binding site is contributed by H448. Residue E483 coordinates ATP. Residue R490 participates in L-aspartate binding. 535 to 538 (GIDR) is an ATP binding site.

Belongs to the class-II aminoacyl-tRNA synthetase family. Type 1 subfamily. Homodimer.

It localises to the cytoplasm. It catalyses the reaction tRNA(Asp) + L-aspartate + ATP = L-aspartyl-tRNA(Asp) + AMP + diphosphate. Its function is as follows. Catalyzes the attachment of L-aspartate to tRNA(Asp) in a two-step reaction: L-aspartate is first activated by ATP to form Asp-AMP and then transferred to the acceptor end of tRNA(Asp). The protein is Aspartate--tRNA ligase of Xylella fastidiosa (strain M12).